Reading from the N-terminus, the 329-residue chain is DNA-directed RNA polymerase subunit alpha (329 aa).

The tract at residues Met1–Arg235 is alpha N-terminal domain (alpha-NTD). Residues Phe249–Glu329 are alpha C-terminal domain (alpha-CTD).

It belongs to the RNA polymerase alpha chain family. As to quaternary structure, homodimer. The RNAP catalytic core consists of 2 alpha, 1 beta, 1 beta' and 1 omega subunit. When a sigma factor is associated with the core the holoenzyme is formed, which can initiate transcription.

It catalyses the reaction RNA(n) + a ribonucleoside 5'-triphosphate = RNA(n+1) + diphosphate. DNA-dependent RNA polymerase catalyzes the transcription of DNA into RNA using the four ribonucleoside triphosphates as substrates. The sequence is that of DNA-directed RNA polymerase subunit alpha from Pectobacterium atrosepticum (strain SCRI 1043 / ATCC BAA-672) (Erwinia carotovora subsp. atroseptica).